A 395-amino-acid chain; its full sequence is Imidazolonepropionase (395 aa).

Fe(3+) contacts are provided by His63 and His65. Residues His63 and His65 each coordinate Zn(2+). The 4-imidazolone-5-propanoate site is built by Arg72, Tyr135, and His168. Tyr135 provides a ligand contact to N-formimidoyl-L-glutamate. Position 233 (His233) interacts with Fe(3+). Residue His233 coordinates Zn(2+). Position 236 (Gln236) interacts with 4-imidazolone-5-propanoate. Asp308 contributes to the Fe(3+) binding site. Asp308 contacts Zn(2+). N-formimidoyl-L-glutamate contacts are provided by Asn310 and Gly312. Position 313 (Thr313) interacts with 4-imidazolone-5-propanoate.

This sequence belongs to the metallo-dependent hydrolases superfamily. HutI family. Zn(2+) serves as cofactor. Requires Fe(3+) as cofactor.

The protein localises to the cytoplasm. The catalysed reaction is 4-imidazolone-5-propanoate + H2O = N-formimidoyl-L-glutamate. It functions in the pathway amino-acid degradation; L-histidine degradation into L-glutamate; N-formimidoyl-L-glutamate from L-histidine: step 3/3. Its function is as follows. Catalyzes the hydrolytic cleavage of the carbon-nitrogen bond in imidazolone-5-propanoate to yield N-formimidoyl-L-glutamate. It is the third step in the universal histidine degradation pathway. The chain is Imidazolonepropionase from Cereibacter sphaeroides (strain ATCC 17023 / DSM 158 / JCM 6121 / CCUG 31486 / LMG 2827 / NBRC 12203 / NCIMB 8253 / ATH 2.4.1.) (Rhodobacter sphaeroides).